Consider the following 226-residue polypeptide: Ribosomal RNA large subunit methyltransferase E (226 aa).

The segment at 1 to 25 is disordered; the sequence is MVKPPAGGNEGGRGKPARLKTAYGR. S-adenosyl-L-methionine contacts are provided by G82, W84, D100, D116, and D140. The Proton acceptor role is filled by K180.

The protein belongs to the class I-like SAM-binding methyltransferase superfamily. RNA methyltransferase RlmE family.

The protein localises to the cytoplasm. It catalyses the reaction uridine(2552) in 23S rRNA + S-adenosyl-L-methionine = 2'-O-methyluridine(2552) in 23S rRNA + S-adenosyl-L-homocysteine + H(+). In terms of biological role, specifically methylates the uridine in position 2552 of 23S rRNA at the 2'-O position of the ribose in the fully assembled 50S ribosomal subunit. The chain is Ribosomal RNA large subunit methyltransferase E from Caulobacter vibrioides (strain ATCC 19089 / CIP 103742 / CB 15) (Caulobacter crescentus).